The primary structure comprises 464 residues: Na(+)/H(+) antiporter NhaA 1 (464 aa).

The next 11 helical transmembrane spans lie at Gly-41 to Ala-61, Leu-85 to Leu-105, Val-121 to Leu-141, Gly-150 to Ala-170, Phe-180 to Tyr-200, Ser-207 to Ile-227, Phe-234 to Ala-254, Val-329 to Gly-349, Val-363 to Ile-383, Ile-399 to Leu-419, and Ile-428 to Leu-448.

This sequence belongs to the NhaA Na(+)/H(+) (TC 2.A.33) antiporter family.

The protein localises to the cell inner membrane. It catalyses the reaction Na(+)(in) + 2 H(+)(out) = Na(+)(out) + 2 H(+)(in). Its function is as follows. Na(+)/H(+) antiporter that extrudes sodium in exchange for external protons. The protein is Na(+)/H(+) antiporter NhaA 1 of Saccharophagus degradans (strain 2-40 / ATCC 43961 / DSM 17024).